A 227-amino-acid polypeptide reads, in one-letter code: MQFKNVALAASVAALSATASAEGYTPGEPWSTLTPTGSISCGAAEYTTTFGIAVQAITSSKAKRDVISQIGDGQVQATSAATAQATDSQAQATTTATPTSSEKISSSASKTSTNATSSSCATPSLKDSSCKNSGTLELTLKDGVLTDAKGRIGSIVANRQFQFDGPPPQAGAIYAAGWSITEDGYLALGDSDVFYQCLSGNFYNLYDQNVAEQCSAIHLEAVSLVDC.

The first 21 residues, Met-1–Ala-21, serve as a signal peptide directing secretion. Residues Glu-22 to Arg-64 constitute a propeptide that is removed on maturation. One copy of the PIR1/2/3 repeat lies at Asp-65–Thr-78. The O-linked (Man) serine glycan is linked to Ser-68. A glycan (O-linked (Man) threonine) is linked at Thr-78. Residues Ala-83–Ser-124 show a composition bias toward low complexity. The interval Ala-83–Asp-127 is disordered. Ser-105, Ser-106, Ser-107, and Ser-109 each carry an O-linked (Man) serine glycan. A glycan (O-linked (Man) threonine) is linked at Thr-111. Ser-112 carries an O-linked (Man) serine glycan. The O-linked (Man) threonine glycan is linked to Thr-113. The N-linked (GlcNAc...) asparagine glycan is linked to Asn-114. O-linked (Man) threonine glycosylation occurs at Thr-116. 2 O-linked (Man) serine glycosylation sites follow: Ser-117 and Ser-118.

This sequence belongs to the PIR protein family. In terms of processing, covalently linked to beta-1,3-glucan of the inner cell wall layer via an alkali-sensitive ester linkage between the gamma-carboxyl group of glutamic acid, arising from Gln-74 within the PIR1/2/3 repeat, and hydroxyl groups of glucoses of beta-1,3-glucan chains. Post-translationally, extensively O-mannosylated. Also N-glycosylated.

The protein localises to the secreted. It is found in the cell wall. In terms of biological role, component of the outer cell wall layer. Required for stability of the cell wall and for optimal growth. Required for resistance against several antifungal and cell wall-perturbing agents. In Saccharomyces cerevisiae (strain ATCC 204508 / S288c) (Baker's yeast), this protein is Cell wall mannoprotein CIS3 (CIS3).